The sequence spans 368 residues: Protein HGH1 homolog (368 aa).

Belongs to the HGH1 family.

This Drosophila pseudoobscura pseudoobscura (Fruit fly) protein is Protein HGH1 homolog.